The sequence spans 99 residues: Integration host factor subunit alpha (99 aa).

The protein belongs to the bacterial histone-like protein family. Heterodimer of an alpha and a beta chain.

Its function is as follows. This protein is one of the two subunits of integration host factor, a specific DNA-binding protein that functions in genetic recombination as well as in transcriptional and translational control. This is Integration host factor subunit alpha from Psychrobacter arcticus (strain DSM 17307 / VKM B-2377 / 273-4).